The primary structure comprises 310 residues: Nitric oxide synthase-interacting protein homolog (310 aa).

The span at 115–124 (FSAIESTPSR) shows a compositional bias: polar residues. A disordered region spans residues 115–141 (FSAIESTPSRTGAVATPRPEVGSLKRQ).

It belongs to the NOSIP family.

It is found in the cytoplasm. The protein localises to the nucleus. Its function is as follows. Negatively regulates nitric oxide production by inducing nitric oxide synthase translocation to actin cytoskeleton and inhibiting its enzymatic activity. The chain is Nitric oxide synthase-interacting protein homolog from Caenorhabditis elegans.